Consider the following 311-residue polypeptide: Short chain dehydrogenase opdN (311 aa).

Residues Leu-48, Lys-73, Glu-96, Asn-123, Tyr-217, and Lys-221 each contribute to the NADP(+) site. Tyr-217 serves as the catalytic Proton donor. Lys-221 (lowers pKa of active site Tyr) is an active-site residue.

This sequence belongs to the short-chain dehydrogenases/reductases (SDR) family.

Its pathway is secondary metabolite biosynthesis. Its function is as follows. Short chain dehydrogenase; part of the gene cluster that mediates the biosynthesis of oxopyrrolidines, polyketide-amino acid hybrid compounds with feature structures of tetramic acid. Does not seem to play a role in oxopyrrolidines A and B biosynthesis. May be involved in further modifications of these oxopyrrolidines. This is Short chain dehydrogenase opdN from Penicillium oxalicum (strain 114-2 / CGMCC 5302) (Penicillium decumbens).